The following is a 338-amino-acid chain: MMDCDHLLRLGMTAKKILENGKGILAADETPKTLGRRFEKLGITNTEENRRKFREILFSTKGIERYIGGVILNQETFEQTSGSGVPLTELLKKKGIEIGIKLDKGLIDYKEKEKISVGLEDLDLRCKSSAFKDATFAKWRSLFYFYDGIPSEDCINENCSILAKYAIICQKNGLVPIVEPEVFLEGDYSMKRSYEVTRQILSTLMKYLNYELVYIPGVLIKASYVTSGQLSNEKYTPKKVATFTLRALLSTIPCGIPGIVFLSGGHGSEDAIGFLNAINMERGCRTWSLSFSFARALTDGVLETWRGDDSNIEEAQKILLETSFKACRGAEGKLWDQE.

Positions 50 and 138 each coordinate substrate. E179 functions as the Proton acceptor in the catalytic mechanism. K221 functions as the Schiff-base intermediate with dihydroxyacetone-P in the catalytic mechanism.

The protein belongs to the class I fructose-bisphosphate aldolase family.

It carries out the reaction beta-D-fructose 1,6-bisphosphate = D-glyceraldehyde 3-phosphate + dihydroxyacetone phosphate. It participates in carbohydrate degradation; glycolysis; D-glyceraldehyde 3-phosphate and glycerone phosphate from D-glucose: step 4/4. The chain is Fructose-bisphosphate aldolase from Encephalitozoon cuniculi (strain GB-M1) (Microsporidian parasite).